Reading from the N-terminus, the 233-residue chain is Large ribosomal subunit protein uL3 (233 aa).

Residues 145-172 are disordered; the sequence is FGSQRASHGNSRSHRVPGSIGQAQDPGR. At Gln168 the chain carries N5-methylglutamine.

The protein belongs to the universal ribosomal protein uL3 family. As to quaternary structure, part of the 50S ribosomal subunit. Forms a cluster with proteins L14 and L19. Methylated by PrmB.

Its function is as follows. One of the primary rRNA binding proteins, it binds directly near the 3'-end of the 23S rRNA, where it nucleates assembly of the 50S subunit. The chain is Large ribosomal subunit protein uL3 from Bordetella petrii (strain ATCC BAA-461 / DSM 12804 / CCUG 43448).